The sequence spans 571 residues: Leucine aminopeptidase A1, chloroplastic (571 aa).

A chloroplast-targeting transit peptide spans 1-53; sequence MATLRVSSLFASSSSSLHSNPSVFTKYQSSPKWAFSFPVTPLCSKRSKRIVHC. Mg(2+) is bound by residues lysine 342 and aspartate 347. Lysine 354 is an active-site residue. 3 residues coordinate Mg(2+): aspartate 367, aspartate 427, and glutamate 429. Residue arginine 431 is part of the active site.

This sequence belongs to the peptidase M17 family. In terms of assembly, homohexamer (dimer of homotrimers). The cofactor is Mg(2+). In terms of tissue distribution, observed during floral development. Expressed in healthy and senescent leaves, cotyledons (emergence from seed coats), pistils, sepals, petals, stamens, and floral buds (at protein level). Present at very low levels in healthy leaves.

It localises to the plastid. It is found in the chloroplast. It catalyses the reaction Release of an N-terminal amino acid, Xaa-|-Yaa-, in which Xaa is preferably Leu, but may be other amino acids including Pro although not Arg or Lys, and Yaa may be Pro. Amino acid amides and methyl esters are also readily hydrolyzed, but rates on arylamides are exceedingly low.. The catalysed reaction is Release of N-terminal proline from a peptide.. Catalyzes the removal of unsubstituted N-terminal amino acids from various peptides. When associated as homohexamer, catalyzes the proteolyzes of Xaa-Leu dipeptides. Possesses leucine aminopeptidase activity against the model substrate leucine-amido methyl coumarin. Presumably involved in the processing and regular turnover of intracellular proteins. Regulates wound signaling and has a role in insect defense. In terms of biological role, functions as a molecular chaperone to protect proteins from heat-induced damage. The protein is Leucine aminopeptidase A1, chloroplastic of Solanum lycopersicum (Tomato).